A 291-amino-acid polypeptide reads, in one-letter code: Transmembrane protein 41B (291 aa).

Residues 1-39 (MAKGRVAERSQLGAHHTTPVGDGAAGTRGLAAPGSRDHQ) are disordered. At Thr-18 the chain carries Phosphothreonine. A Phosphoserine modification is found at Ser-35. 6 helical membrane passes run 52 to 72 (MSLL…FLVY), 109 to 129 (FYVQ…TFAI), 147 to 169 (LALF…LSYL), 197 to 217 (LINY…FINI), 225 to 245 (PLKV…FVAI), and 262 to 282 (SWNS…PAIF). The segment at 140 to 251 (GFLYPFPLAL…FVAIKAGTTL (112 aa)) is VTT domain; required for its function in autophagy.

The protein belongs to the TMEM41 family. As to quaternary structure, interacts with VMP1. Interacts with COPA, COPB1, VDAC1 and ERLIN2. Interacts with ATG2A. Interacts with SURF4. (Microbial infection) Interacts with Zika virus NS4A protein and Yellow fever virus NS4B protein.

It localises to the endoplasmic reticulum membrane. The protein localises to the endomembrane system. Its subcellular location is the cytoplasm. The enzyme catalyses a 1,2-diacyl-sn-glycero-3-phospho-L-serine(in) = a 1,2-diacyl-sn-glycero-3-phospho-L-serine(out). It catalyses the reaction cholesterol(in) = cholesterol(out). The catalysed reaction is a 1,2-diacyl-sn-glycero-3-phosphocholine(in) = a 1,2-diacyl-sn-glycero-3-phosphocholine(out). It carries out the reaction a 1,2-diacyl-sn-glycero-3-phosphoethanolamine(in) = a 1,2-diacyl-sn-glycero-3-phosphoethanolamine(out). Phospholipid scramblase involved in lipid homeostasis and membrane dynamics processes. Has phospholipid scramblase activity toward cholesterol and phosphatidylserine, as well as phosphatidylethanolamine and phosphatidylcholine. Required for autophagosome formation: participates in early stages of autophagosome biogenesis at the endoplasmic reticulum (ER) membrane by reequilibrating the leaflets of the ER as lipids are extracted by ATG2 (ATG2A or ATG2B) to mediate autophagosome assembly. In addition to autophagy, involved in other processes in which phospholipid scramblase activity is required. Required for normal motor neuron development. Its function is as follows. (Microbial infection) Critical host factor required for infection by human coronaviruses SARS-CoV-2, HCoV-OC43, HCoV-NL63, and HCoV-229E, as well as all flaviviruses tested such as Zika virus and Yellow fever virus. Required post-entry of the virus to facilitate the ER membrane remodeling necessary to form replication organelles. In Homo sapiens (Human), this protein is Transmembrane protein 41B.